The sequence spans 115 residues: MRYVASYLLAALGGNSSPSAKDIKKILDSVGIEADDDRLNKVISELNGKNIEDVIAQGIGKLASVPAGGAVAVSAAPGSAAPAAGSAPAAAEEKKDEKKEESEESDDDMGFGLFD.

Met1 carries the N-acetylmethionine modification. Phosphoserine is present on residues Ser17 and Ser19. N6-acetyllysine; alternate is present on Lys21. At Lys21 the chain carries N6-succinyllysine; alternate. Over residues Gly78 to Ala90 the composition is skewed to low complexity. A disordered region spans residues Gly78–Asp115. Residues Ser79 and Ser86 each carry the phosphoserine modification. The span at Ala91 to Glu101 shows a compositional bias: basic and acidic residues. Ser102 and Ser105 each carry phosphoserine.

The protein belongs to the eukaryotic ribosomal protein P1/P2 family. As to quaternary structure, heterodimer with P1 at the lateral ribosomal stalk of the large ribosomal subunit.

Its function is as follows. Plays an important role in the elongation step of protein synthesis. This chain is Large ribosomal subunit protein P2 (RPLP2), found in Homo sapiens (Human).